Reading from the N-terminus, the 195-residue chain is ATP-dependent Clp protease proteolytic subunit (195 aa).

Residue serine 101 is the Nucleophile of the active site. Residue histidine 126 is part of the active site.

Belongs to the peptidase S14 family. As to quaternary structure, component of the chloroplastic Clp protease core complex.

The protein resides in the plastid. Its subcellular location is the chloroplast stroma. It carries out the reaction Hydrolysis of proteins to small peptides in the presence of ATP and magnesium. alpha-casein is the usual test substrate. In the absence of ATP, only oligopeptides shorter than five residues are hydrolyzed (such as succinyl-Leu-Tyr-|-NHMec, and Leu-Tyr-Leu-|-Tyr-Trp, in which cleavage of the -Tyr-|-Leu- and -Tyr-|-Trp bonds also occurs).. Cleaves peptides in various proteins in a process that requires ATP hydrolysis. Has a chymotrypsin-like activity. Plays a major role in the degradation of misfolded proteins. This chain is ATP-dependent Clp protease proteolytic subunit, found in Cucumis sativus (Cucumber).